The chain runs to 364 residues: Flagellar P-ring protein (364 aa).

Positions 1-29 (MKTIGGKVFRHAAILAACVLPLWCQPALA) are cleaved as a signal peptide.

It belongs to the FlgI family. The basal body constitutes a major portion of the flagellar organelle and consists of four rings (L,P,S, and M) mounted on a central rod.

The protein localises to the periplasm. The protein resides in the bacterial flagellum basal body. Assembles around the rod to form the L-ring and probably protects the motor/basal body from shearing forces during rotation. The sequence is that of Flagellar P-ring protein from Dechloromonas aromatica (strain RCB).